The following is a 695-amino-acid chain: Elongation factor G 1 (695 aa).

The tr-type G domain maps to 5–280; that stretch reads ARYRNIGIFA…AVVDYLPSPT (276 aa). Residues 14–21, 78–82, and 132–135 contribute to the GTP site; these read AHVDAGKT, DTPGH, and NKLD.

The protein belongs to the TRAFAC class translation factor GTPase superfamily. Classic translation factor GTPase family. EF-G/EF-2 subfamily.

Its subcellular location is the cytoplasm. Functionally, catalyzes the GTP-dependent ribosomal translocation step during translation elongation. During this step, the ribosome changes from the pre-translocational (PRE) to the post-translocational (POST) state as the newly formed A-site-bound peptidyl-tRNA and P-site-bound deacylated tRNA move to the P and E sites, respectively. Catalyzes the coordinated movement of the two tRNA molecules, the mRNA and conformational changes in the ribosome. In Pseudoalteromonas atlantica (strain T6c / ATCC BAA-1087), this protein is Elongation factor G 1.